Consider the following 255-residue polypeptide: Lipoprotein-releasing system ATP-binding protein LolD 2 (255 aa).

Residues 9–254 (LEARGIRKSY…SDSAKLETVA (246 aa)) enclose the ABC transporter domain. 45–52 (GRSGSGKS) provides a ligand contact to ATP.

This sequence belongs to the ABC transporter superfamily. Lipoprotein translocase (TC 3.A.1.125) family. In terms of assembly, the complex is composed of two ATP-binding proteins (LolD) and two transmembrane proteins (LolC and LolE).

The protein resides in the cell inner membrane. Its function is as follows. Part of the ABC transporter complex LolCDE involved in the translocation of mature outer membrane-directed lipoproteins, from the inner membrane to the periplasmic chaperone, LolA. Responsible for the formation of the LolA-lipoprotein complex in an ATP-dependent manner. The protein is Lipoprotein-releasing system ATP-binding protein LolD 2 of Rhodopirellula baltica (strain DSM 10527 / NCIMB 13988 / SH1).